The sequence spans 312 residues: Ribosomal RNA small subunit methyltransferase H (312 aa).

Residues 34–36, Asp-54, Phe-78, Asp-100, and Gln-107 each bind S-adenosyl-L-methionine; that span reads GGH.

Belongs to the methyltransferase superfamily. RsmH family.

The protein localises to the cytoplasm. It carries out the reaction cytidine(1402) in 16S rRNA + S-adenosyl-L-methionine = N(4)-methylcytidine(1402) in 16S rRNA + S-adenosyl-L-homocysteine + H(+). Functionally, specifically methylates the N4 position of cytidine in position 1402 (C1402) of 16S rRNA. The polypeptide is Ribosomal RNA small subunit methyltransferase H (Salmonella choleraesuis (strain SC-B67)).